Reading from the N-terminus, the 131-residue chain is Profilin (131 aa).

Belongs to the profilin family. As to quaternary structure, occurs in many kinds of cells as a complex with monomeric actin in a 1:1 ratio.

It is found in the cytoplasm. It localises to the cytoskeleton. Functionally, binds to actin and affects the structure of the cytoskeleton. At high concentrations, profilin prevents the polymerization of actin, whereas it enhances it at low concentrations. Has a high affinity for poly-proline. This chain is Profilin, found in Citrullus lanatus (Watermelon).